Here is a 124-residue protein sequence, read N- to C-terminus: Late embryogenesis abundant protein 37 (124 aa).

Residues 1 to 35 (MSQSLFNLKSLSRSINNTIRMRRYIVITKASQRAY) constitute a mitochondrion transit peptide.

It belongs to the LEA type 3 family.

It localises to the mitochondrion. The polypeptide is Late embryogenesis abundant protein 37 (Arabidopsis thaliana (Mouse-ear cress)).